A 301-amino-acid polypeptide reads, in one-letter code: Ribonuclease HIII (301 aa).

In terms of domain architecture, RNase H type-2 spans 84–301 (ASAIGSDEVG…TEKAARIAKK (218 aa)). Residues D90, E91, and D195 each contribute to the a divalent metal cation site.

This sequence belongs to the RNase HII family. RnhC subfamily. Mn(2+) serves as cofactor. It depends on Mg(2+) as a cofactor.

Its subcellular location is the cytoplasm. It carries out the reaction Endonucleolytic cleavage to 5'-phosphomonoester.. Its function is as follows. Endonuclease that specifically degrades the RNA of RNA-DNA hybrids. This is Ribonuclease HIII from Geobacillus sp. (strain WCH70).